The primary structure comprises 632 residues: Chaperone protein HtpG (632 aa).

Residues 1–339 (MAHETMSFQA…SADLPLNVSR (339 aa)) are a; substrate-binding. The segment at 340-559 (EILQESRDVK…DNDMSGYLQR (220 aa)) is b. The tract at residues 560-632 (MLKAAGQNAP…TNALLLSRAA (73 aa)) is c.

It belongs to the heat shock protein 90 family. Homodimer.

It localises to the cytoplasm. Functionally, molecular chaperone. Has ATPase activity. This chain is Chaperone protein HtpG, found in Burkholderia ambifaria (strain ATCC BAA-244 / DSM 16087 / CCUG 44356 / LMG 19182 / AMMD) (Burkholderia cepacia (strain AMMD)).